A 252-amino-acid chain; its full sequence is Probable transcriptional regulatory protein Tmel_0985 (252 aa).

The protein belongs to the TACO1 family.

The protein resides in the cytoplasm. The protein is Probable transcriptional regulatory protein Tmel_0985 of Thermosipho melanesiensis (strain DSM 12029 / CIP 104789 / BI429).